The following is a 256-amino-acid chain: MGVTAITVVTLMDGSGRIPAFVGEAHPDLWKVLTEWCYASLVQQRRAADEDTPRQHVVLRSSEIAPGSLALLPRATRPVVRTRSDPTAPFYITTETHELTRRPPADGSKPGEPLRISPPPRLDTEWSSVINGIQYLNSGARGTAPIHLWILGAADLCDQVLLAASRSTAAGAPGAPTGARLTRRRPGLTDADALDVIVAGIPATRAMFARVHNRSWRHAGEWTEALHAQIVTRGDVRRRRGGRGNGRERAPRCTIS.

Disordered regions lie at residues 100–120 (TRRPPADGSKPGEPLRISPPP), 167–186 (STAAGAPGAPTGARLTRRRP), and 236–256 (VRRRRGGRGNGRERAPRCTIS). The segment covering 167 to 180 (STAAGAPGAPTGAR) has biased composition (low complexity). Residues 245–256 (NGRERAPRCTIS) are compositionally biased toward basic and acidic residues.

The protein belongs to the herpesviridae US2 family.

In Sus scrofa (Pig), this protein is Protein US2 homolog (28K).